The chain runs to 305 residues: Taste receptor type 2 member 13 (305 aa).

Topologically, residues 1–7 (MGSSLYD) are extracellular. Residues 8–28 (ILTIVMIAEFIFGNVTNGFIV) traverse the membrane as a helical segment. At 29 to 42 (LTNCIAWLSKRTLS) the chain is on the cytoplasmic side. A helical membrane pass occupies residues 43–63 (FIGWIQLFLAISRVVLIWEML). Over 64 to 88 (LAWLKYMKYSFSYLAGTELRVMMLT) the chain is Extracellular. Residues 89-109 (WVVSNHFSLWLATILSIFYLL) form a helical membrane-spanning segment. Residues 110 to 128 (KIASFSRPVFLYLKWRVKK) lie on the Cytoplasmic side of the membrane. A helical membrane pass occupies residues 129-149 (VLLLILLGNLIFLMFNILQIN). Residues 150-182 (THIEDWMDQYKRNITWDSRVNEFVGFSNLVLLE) are Extracellular-facing. Residue N162 is glycosylated (N-linked (GlcNAc...) asparagine). Residues 183–203 (MIMFSVTPFTVALVSFILLIF) form a helical membrane-spanning segment. At 204-232 (SLWKHLQKMHLSSRGERDPSTKAHVNALR) the chain is on the cytoplasmic side. A helical transmembrane segment spans residues 233–253 (IMVSFLLLYATYFISFFISLI). Residues 254 to 262 (PMAHKKGLD) are Extracellular-facing. A helical transmembrane segment spans residues 263 to 283 (LMFSLTVGLFYPSSHSFILIL). The Cytoplasmic segment spans residues 284 to 305 (GHSNLRHSSCLVITYLRCKEKD).

The protein belongs to the G-protein coupled receptor T2R family. In terms of tissue distribution, expressed in subsets of taste receptor cells of the tongue and palate epithelium and exclusively in gustducin-positive cells. Expressed in 15% taste bud cells in circumvallate and foliate papillae but only in 2% in fungiform papillae. Expressed in the duodenum, antrum and fundus (part of the stomach).

The protein localises to the membrane. Its function is as follows. Receptor that may play a role in the perception of bitterness and is gustducin-linked. May play a role in sensing the chemical composition of the gastrointestinal content. The activity of this receptor may stimulate alpha gustducin, mediate PLC-beta-2 activation and lead to the gating of TRPM5. The sequence is that of Taste receptor type 2 member 13 (Tas2r13) from Rattus norvegicus (Rat).